The following is a 662-amino-acid chain: Methyl-accepting chemotaxis protein TlpA (662 aa).

Topologically, residues 1 to 16 are cytoplasmic; it reads MKKTLTTIRRSSIARR. The helical transmembrane segment at 17–37 threads the bilayer; sequence LIISFLLILIVPITALSVSAY. Topologically, residues 38-281 are extracellular; the sequence is QSAVASLDVQ…IHDAASRVLI (244 aa). One can recognise a Cache domain in the interval 152-228; the sequence is VTEPYESISS…KAGTELKGDW (77 aa). Residues 282–302 traverse the membrane as a helical segment; that stretch reads MASIVLAIAIGAGMTAIYFVI. In terms of domain architecture, HAMP spans 303–355; that stretch reads RSITKPLRRIVASAEKISEGDLTETIEINSKDELGVLSESFNHMAHSLRSLIH. The Cytoplasmic segment spans residues 303–662; sequence RSITKPLRRI…DLTKQFKVDK (360 aa). Glutamate methyl ester (Glu) is present on residues E370, E594, E629, and E636. The region spanning 374-610 is the Methyl-accepting transducer domain; it reads SADQTSRATE…EISAASNDIT (237 aa).

Belongs to the methyl-accepting chemotaxis (MCP) protein family. Interacts with YabA.

Its subcellular location is the cell membrane. Functionally, chemotactic-signal transducers respond to changes in the concentration of attractants and repellents in the environment, transduce a signal from the outside to the inside of the cell, and facilitate sensory adaptation through the variation of the level of methylation. All amino acids serve as attractants in B.subtilis, they appear to cause an increase in the turnover methyl groups, leading to methylation of an unidentified acceptor, while repellents have been shown to cause a decrease in methyl group turnover. The methyl groups are added by a methyltransferase and removed by a methylesterase. The sequence is that of Methyl-accepting chemotaxis protein TlpA from Bacillus subtilis (strain 168).